A 472-amino-acid polypeptide reads, in one-letter code: MESLESVDASSGSVGSYMSKSVRKHWWSRKGYHPTGSSKNGSRLKISSDENFQDELVVLDDAFLCNVPLELPSTSNAQKTAAESFSKLSPQDQLLSLQLNNVQESVFQQSTFNLPDALLDPGPASKEKQAVLSIGRPSWLPPKSKEEEKKHMREFEQIKKSAMRYDRQKQKEKIKMVEQKNKRNLYLVNVWEREILRNWPDALKSSRYAGIWRQGIPSRVRGRVWEKAIGNNLKLDYQSFFNARANAQKREAAEKAEQMNNANQFREDVCALELDLQSTMPHYSLFHTEGPLRRDLIGLLRAYSYYRFDTSYIPGTSFIGALLLLNMNLTSAFNCLANLLDKPFLQAVYTQDTSSLKSFYQTFLDTLKKNEPELATHLLIKLELVPDDFVYPLLRKLFIPMVSPEIASRILDCYVFEEDSFFIQLLMAVFKLLKPKLLVDDSRLVLSALLFENWDLGPEDEFMHFVYDISLS.

The 204-residue stretch at G215–E418 folds into the Rab-GAP TBC domain.

The protein is TBC domain-containing protein C23D3.03c of Schizosaccharomyces pombe (strain 972 / ATCC 24843) (Fission yeast).